The sequence spans 550 residues: Cell pattern formation-associated protein STUA (550 aa).

Residues 86-192 (RVTATLWEDE…HNIGALLYHP (107 aa)) form the HTH APSES-type domain. The H-T-H motif DNA-binding region spans 120 to 141 (GTKLLNVAGMTRGRRDGILKSE). Residues 246–266 (SLANGPQSLASTPQPLTNGSQ) are compositionally biased toward polar residues. Disordered regions lie at residues 246-277 (SLAN…GMLK), 371-412 (HHQP…VKRR), 447-467 (KRRD…DHLN), and 527-550 (APVY…QSFG). The segment covering 385–395 (RGRDEDDDVHR) has biased composition (basic and acidic residues). A nuclear localization domain region spans residues 517-546 (TVAASPSYPSAPVYDTGARPPSAISAPRRQ).

It belongs to the EFG1/PHD1/stuA family.

The protein resides in the nucleus. Its function is as follows. Transcription factor that regulates asexual reproduction. Binds the StuA-response elements (StRE) with the consensus sequence 5'-(A/T)CGCG(T/A)N(A/C)-3' at the promoters of target genes. Differentially regulates the development of macroconidia, microconidia, and chlamydospores. Acts as a positive regulator for the development of macroconidia and as a negative regulator for the development of chlamydospores. Involved in microconidium formation specifically in infected plants. The polypeptide is Cell pattern formation-associated protein STUA (Fusarium oxysporum (Fusarium vascular wilt)).